Here is a 912-residue protein sequence, read N- to C-terminus: Androgen receptor (912 aa).

Residues 1–550 (MEVQLGLGRV…PIDYYFPPQK (550 aa)) are modulating. Positions 1-579 (MEVQLGLGRV…GSCKVFFKRA (579 aa)) are interaction with ZNF318. Disordered stretches follow at residues 35 to 156 (QNPG…GPTF) and 204 to 236 (QQQQ…YLGG). Ser69 bears the Phosphoserine; by CDK9 mark. Residue Ser82 is modified to Phosphoserine. The span at 204–213 (QQQQEVVSEG) shows a compositional bias: low complexity. A compositionally biased stretch (polar residues) spans 226–236 (PTSSKDSYLGG). Tyr233 bears the Phosphotyrosine; by CSK mark. The residue at position 266 (Ser266) is a Phosphoserine. Position 277 is a phosphotyrosine; by CSK and TNK2 (Tyr277). Residues Tyr315, Tyr354, Tyr365, and Tyr370 each carry the phosphotyrosine; by CSK modification. The residue at position 371 (Tyr371) is a Phosphotyrosine; by CSK and TNK2. The disordered stretch occupies residues 375-394 (LSLAGPPPPPPSPHPHARIK). Residues 379-388 (GPPPPPPSPH) show a composition bias toward pro residues. Residue Lys394 forms a Glycyl lysine isopeptide (Lys-Gly) (interchain with G-Cter in SUMO) linkage. Residue Tyr401 is modified to Phosphotyrosine; by CSK. The tract at residues 452–490 (LYGPCGGSGGGGTGESVSVTPYGYTRPQQGLTGQEGDFP) is disordered. Gly residues predominate over residues 455–465 (PCGGSGGGGTG). Residue Lys513 forms a Glycyl lysine isopeptide (Lys-Gly) (interchain with G-Cter in SUMO) linkage. A phosphotyrosine; by CSK mark is found at Tyr527 and Tyr544. The interval 544 to 911 (YYFPPQKTCL…GKVKPIYFHT (368 aa)) is interaction with LPXN. Positions 551 to 624 (TCLICGDEAS…AGMTLGARRL (74 aa)) form a DNA-binding region, nuclear receptor. NR C4-type zinc fingers lie at residues 552–572 (CLIC…CGSC) and 588–612 (CASR…LRKC). Positions 564–654 (YGALTCGSCK…TEETTQKLTV (91 aa)) are interaction with HIPK3. Positions 584–911 (QKYLCASRND…GKVKPIYFHT (328 aa)) are interaction with CCAR1. The tract at residues 617 to 911 (MTLGARRLKK…GKVKPIYFHT (295 aa)) is interaction with KAT7. Position 643 is a phosphoserine; by STK4/MST1 (Ser643). The NR LBD domain occupies 661–892 (ECQPIFLNVL…DFPEMMAEII (232 aa)). The 17beta-hydroxy-5alpha-androstan-3-one site is built by Asn698 and Arg745. Glycyl lysine isopeptide (Lys-Gly) (interchain with G-Cter in ubiquitin) cross-links involve residues Lys838 and Lys840. Thr870 is a 17beta-hydroxy-5alpha-androstan-3-one binding site. Residue Tyr908 is modified to Phosphotyrosine; by CSK.

Belongs to the nuclear hormone receptor family. NR3 subfamily. As to quaternary structure, binds DNA as a homodimer. Part of a ternary complex containing AR, EFCAB6/DJBP and PARK7. Interacts with HIPK3 and NR0B2 in the presence of androgen. The ligand binding domain interacts with KAT7/HBO1 in the presence of dihydrotestosterone. Interacts with EFCAB6/DJBP, PQBP1, RANBP9, RBAK, SPDEF, SRA1, TGFB1I1 and RREB1. Interacts with ZMIZ1/ZIMP10 and ZMIZ2/ZMIP7 which both enhance its transactivation activity. Interacts with SLC30A9 and RAD54L2/ARIP4. Interacts with MACROD1 (via macro domain). Interacts via the ligand-binding domain with LXXLL and FXXLF motifs from NCOA1, NCOA2, NCOA3 and MAGEA11. Interacts (via nuclear receptor DNA binding domain and nuclear receptor ligand binding domain) with NCOA4. The AR N-terminal poly-Gln region binds Ran resulting in enhancement of AR-mediated transactivation. Ran-binding decreases as the poly-Gln length increases. Interacts with HIP1 (via coiled coil domain). Interacts (via ligand-binding domain) with TRIM68. Interacts with TNK2. Interacts with USP26. Interacts with RNF6. Interacts (regulated by RNF6 probably through polyubiquitination) with RNF14; regulates AR transcriptional activity. Interacts with PRMT2 and TRIM24. Interacts with RACK1. Interacts with RANBP10; this interaction enhances dihydrotestosterone-induced AR transcriptional activity. Interacts with PRPF6 in a hormone-independent way; this interaction enhances dihydrotestosterone-induced AR transcriptional activity. Interacts with STK4/MST1. Interacts with ZIPK/DAPK3. Interacts with LPXN. Interacts with MAK. Part of a complex containing AR, MAK and NCOA3. Interacts with CRY1. Interacts with CCAR1 and GATA2. Interacts with ZNF318. Interacts with BUD31. Interacts with ARID4A. Interacts with ARID4B. Interacts (via NR LBD domain) with ZBTB7A; the interaction is direct and androgen-dependent. Interacts with NCOR1. Interacts with NCOR2. Interacts with CRY2 in a ligand-dependent manner. Phosphorylation by TNK2 enhances the DNA-binding and transcriptional activity. Phosphorylation at Ser-69 by CDK9 regulates AR promoter selectivity and cell growth. Post-translationally, sumoylated on Lys-394 (major) and Lys-513. Ubiquitinated. Deubiquitinated by USP26. 'Lys-6' and 'Lys-27'-linked polyubiquitination by RNF6 modulates AR transcriptional activity and specificity. In terms of processing, palmitoylated by ZDHHC7 and ZDHHC21. Palmitoylation is required for plasma membrane targeting and for rapid intracellular signaling via ERK and AKT kinases and cAMP generation.

The protein resides in the nucleus. Its subcellular location is the cytoplasm. Steroid hormone receptors are ligand-activated transcription factors that regulate eukaryotic gene expression and affect cellular proliferation and differentiation in target tissues. Transcription factor activity is modulated by bound coactivator and corepressor proteins like ZBTB7A that recruits NCOR1 and NCOR2 to the androgen response elements/ARE on target genes, negatively regulating androgen receptor signaling and androgen-induced cell proliferation. Transcription activation is also down-regulated by NR0B2. Activated, but not phosphorylated, by HIPK3 and ZIPK/DAPK3. This is Androgen receptor (AR) from Crocuta crocuta (Spotted hyena).